Here is a 512-residue protein sequence, read N- to C-terminus: MAGRGGSQLERRRERTPDRGRGSASHPPGRESPSPPPLPLKRHTYRRVVSDQEEEIVVVSENSRSPSPQEQPPPPQQPPKKKPRKTKHVPLQDVSQDSEDEREAEEELGAVGFSYPPVRITGKDGKRSFETLNENDPLTKAASAKMAVTNPLSLPIVSAWEKGMEIMNMLMERYRVESDLKSNFQLMPEQGEVYRRICHLYINEEHRGIPLTFTSNKTLTTMMGRFLQGFVHAHSQIAHKNWESTGCALWLHGCTEVEGKLRCLHGTTMIQKEHMIEMDVASENGQRALKENPDRAKVTQNRWGRSVVQLANNDARCCVHDAGCATNQFSSKSCGVFFTEGAKAQQAFKQLEAFMKAMYPGMNADQAQVMLIPLHCDCNHKPGCVPTMGRQTCKMTPFGMANAEDLDVDGITDATVLASVKHPALMVFQCCNPVYRNSRAQNAGPNCDFKISAPDLLGALQLTRKLWTDSFPDTLLPKLLIPEFKWLAKYQFRNVSLPAGHAETSRQNPFDF.

Residues 1 to 105 (MAGRGGSQLE…QDSEDEREAE (105 aa)) form a disordered region. Residues 9–21 (LERRRERTPDRGR) are compositionally biased toward basic and acidic residues. A compositionally biased stretch (pro residues) spans 69-78 (QEQPPPPQQP). Residues 79 to 88 (PKKKPRKTKH) are compositionally biased toward basic residues. Positions 96 to 105 (QDSEDEREAE) are enriched in acidic residues. The residue at position 174 (tyrosine 174) is a Phosphotyrosine; by host. The Zn(2+) site is built by cysteine 263 and histidine 265. Positions 276–310 (IEMDVASENGQRALKENPDRAKVTQNRWGRSVVQL) are flexible loop. Zn(2+)-binding residues include cysteine 318, cysteine 334, cysteine 376, cysteine 378, cysteine 430, and cysteine 447. The segment at 495 to 512 (VSLPAGHAETSRQNPFDF) is C-terminal arm, DBP binding.

Belongs to the adenoviridae E2A DNA-binding protein family. Homomultimerizes on viral ssDNA bound to pTP. Forms a initiation complex with viral polymerase, pTP and hosts NFIA and POU2F1/OCT1. Interacts with host SRCAP.

The protein resides in the host nucleus. Functionally, plays a role in the elongation phase of viral strand displacement replication by unwinding the template in an ATP-independent fashion, employing its capacity to form multimers. Also enhances the rate of initiation. Released from template upon second strand synthesis. Assembles in complex with viral pTP, viral pol, host NFIA and host POU2F1/OCT1 on viral origin of replication. Covers the whole ssDNA genome during synthesis. The complementary strand synthesis induces its relese from DNA template. May inhibit cellular transcription mediated by the interaction between host SRCAP and CBP. This Homo sapiens (Human) protein is DNA-binding protein.